Consider the following 104-residue polypeptide: Phosphoribosyl-ATP pyrophosphatase (104 aa).

It belongs to the PRA-PH family.

The protein resides in the cytoplasm. The enzyme catalyses 1-(5-phospho-beta-D-ribosyl)-ATP + H2O = 1-(5-phospho-beta-D-ribosyl)-5'-AMP + diphosphate + H(+). It participates in amino-acid biosynthesis; L-histidine biosynthesis; L-histidine from 5-phospho-alpha-D-ribose 1-diphosphate: step 2/9. This Erythrobacter litoralis (strain HTCC2594) protein is Phosphoribosyl-ATP pyrophosphatase.